Here is a 258-residue protein sequence, read N- to C-terminus: MSMATDVTNSKIQVRDLNFYYGKFHALKNISLDIAKNQVTAFIGPSGCGKSTLLRTFNKMYQLYPEQRAEGDILLDGQNILTDKQDIALLRAKVGMVFQKPTPFPMSIYDNIAFGVKLFESLSRADMDERVQWALTKAALWNETKDKLHQSGYSLSGGQQQRLCIARGIAIRPDVLLLDEPCSALDPISTGRIEELISELKSDYTVVIVTHNMQQAARCSDHTAFMYLGELIEFSDTDTLFTTPQQKQTEDYITGRYG.

The 242-residue stretch at 12-253 (IQVRDLNFYY…PQQKQTEDYI (242 aa)) folds into the ABC transporter domain. 44–51 (GPSGCGKS) provides a ligand contact to ATP.

Belongs to the ABC transporter superfamily. Phosphate importer (TC 3.A.1.7) family. The complex is composed of two ATP-binding proteins (PstB), two transmembrane proteins (PstC and PstA) and a solute-binding protein (PstS).

The protein resides in the cell inner membrane. The enzyme catalyses phosphate(out) + ATP + H2O = ADP + 2 phosphate(in) + H(+). Functionally, part of the ABC transporter complex PstSACB involved in phosphate import. Responsible for energy coupling to the transport system. The chain is Phosphate import ATP-binding protein PstB 2 from Yersinia pestis bv. Antiqua (strain Nepal516).